Consider the following 589-residue polypeptide: Transmembrane 9 superfamily member 5 (589 aa).

Positions 1 to 24 are cleaved as a signal peptide; that stretch reads MAQFLLTVLQVLLALTFWIGIGSG. Residues 25 to 227 lie on the Lumenal side of the membrane; the sequence is SSNHYNAGDH…SFHPISQKIH (203 aa). Residues 228-248 traverse the membrane as a helical segment; sequence FFSFLNSITVVVLLIGLISFL. The Cytoplasmic segment spans residues 249-291; that stretch reads FMRHLKNELRSYSIGDEEERKEAGWKLVHSDVFRCPRNISWLC. The chain crosses the membrane as a helical span at residues 292-312; the sequence is AILGTGTQLLILIIALFALAF. The Lumenal segment spans residues 313 to 321; the sequence is TGFLYPYNR. The chain crosses the membrane as a helical span at residues 322–342; that stretch reads GMLLTSLVIMYTLTSIVAGYT. The Cytoplasmic segment spans residues 343 to 361; that stretch reads STSFHSQFEGNKQKRSVRL. Residues 362-382 traverse the membrane as a helical segment; that stretch reads AGILYPVPFFIILSVLNTVAI. Residues 383-394 lie on the Lumenal side of the membrane; the sequence is TYGATAALPFGT. The helical transmembrane segment at 395–415 threads the bilayer; it reads IVIIILIFTLLNIPFLMLGGV. Residues 416–450 are Cytoplasmic-facing; sequence LGNRFGLLEFQPPSAVKRNPREIPPQNWYRRKLYQ. Residues 451–471 form a helical membrane-spanning segment; that stretch reads VFLGGFVPFSAVVLEWHQLYA. Topologically, residues 472–482 are lumenal; that stretch reads SLWGFKIYTSP. Residues 483 to 503 traverse the membrane as a helical segment; sequence GIMLFTFIVLIFLSSSVGIIL. Residues 504-518 lie on the Cytoplasmic side of the membrane; that stretch reads TYIQLSGEDHEWWWR. A helical transmembrane segment spans residues 519–539; that stretch reads SILCGGFTAVFMYGYGVLFYL. Residues 540–550 are Lumenal-facing; that stretch reads RSDMTGFLQLS. A helical membrane pass occupies residues 551 to 571; it reads FYLGYTALLCYALFLVLGTIS. Topologically, residues 572–589 are cytoplasmic; sequence FLASLMFIRHIYRSVKLE. The Endoplasmic reticulum export signal motif lies at 578–583; it reads FIRHIY. Residues 587–589 carry the Golgi retention signal motif; the sequence is KLE.

The protein belongs to the nonaspanin (TM9SF) (TC 9.A.2) family. In terms of tissue distribution, expressed in the root cap and in giant cells.

It is found in the endosome membrane. Its subcellular location is the golgi apparatus membrane. In Arabidopsis thaliana (Mouse-ear cress), this protein is Transmembrane 9 superfamily member 5.